The following is a 299-amino-acid chain: Single myb histone 1 (299 aa).

Residues Met1–Gly61 form the HTH myb-type domain. A DNA-binding region (H-T-H motif) is located at residues Trp28–Ser57. Residues Ser124–Pro192 form the H15 domain. Residues Glu238–Leu279 adopt a coiled-coil conformation.

It belongs to the histone H1/H5 family. SMH subfamily. Forms a homodimer and heterodimers. In terms of tissue distribution, expressed in leaves.

It localises to the nucleus. Its subcellular location is the chromosome. The protein localises to the nucleolus. The protein resides in the telomere. Functionally, binds preferentially double-stranded telomeric repeats 5'-TTTAGGG-3', but can also bind to the single G-rich and C-rich telomeric strand. This Zea mays (Maize) protein is Single myb histone 1 (SMH1).